The primary structure comprises 517 residues: Anthranilate--CoA ligase (517 aa).

161–172 (LQYTSGSTGAPK) is a binding site for AMP.

The protein belongs to the ATP-dependent AMP-binding enzyme family. In terms of assembly, monomer.

It catalyses the reaction anthranilate + ATP + CoA = anthraniloyl-CoA + AMP + diphosphate. Functionally, catalyzes the formation of anthraniloyl-CoA, which is the priming step for entry into the Pseudomonas quinolone signal (PQS) biosynthetic pathway. Also active on a variety of aromatic substrates, including benzoate and chloro and fluoro derivatives of anthranilate. The protein is Anthranilate--CoA ligase (pqsA) of Pseudomonas aeruginosa (strain ATCC 15692 / DSM 22644 / CIP 104116 / JCM 14847 / LMG 12228 / 1C / PRS 101 / PAO1).